The following is a 250-amino-acid chain: ATP synthase subunit a (250 aa).

The next 6 membrane-spanning stretches (helical) occupy residues 26–46, 84–104, 114–134, 143–163, 193–213, and 216–236; these read FTNA…FLYL, FFPM…LGMV, IIVT…YGFY, LFVP…IEII, FVAS…LPLI, and VALT…FAVL.

This sequence belongs to the ATPase A chain family. As to quaternary structure, F-type ATPases have 2 components, CF(1) - the catalytic core - and CF(0) - the membrane proton channel. CF(1) has five subunits: alpha(3), beta(3), gamma(1), delta(1), epsilon(1). CF(0) has three main subunits: a(1), b(2) and c(9-12). The alpha and beta chains form an alternating ring which encloses part of the gamma chain. CF(1) is attached to CF(0) by a central stalk formed by the gamma and epsilon chains, while a peripheral stalk is formed by the delta and b chains.

It localises to the cell inner membrane. Key component of the proton channel; it plays a direct role in the translocation of protons across the membrane. This chain is ATP synthase subunit a, found in Sinorhizobium medicae (strain WSM419) (Ensifer medicae).